Consider the following 386-residue polypeptide: DNA-directed RNA polymerase subunit Rpo1C (386 aa).

It belongs to the RNA polymerase beta' chain family. Part of the RNA polymerase complex.

It is found in the cytoplasm. It catalyses the reaction RNA(n) + a ribonucleoside 5'-triphosphate = RNA(n+1) + diphosphate. DNA-dependent RNA polymerase (RNAP) catalyzes the transcription of DNA into RNA using the four ribonucleoside triphosphates as substrates. Forms part of the jaw domain. The protein is DNA-directed RNA polymerase subunit Rpo1C of Methanococcus maripaludis (strain C7 / ATCC BAA-1331).